The primary structure comprises 787 residues: Phenylalanine--tRNA ligase beta subunit (787 aa).

The region spanning 39–149 is the tRNA-binding domain; sequence APAFAGVVIA…EDAPVGTNIR (111 aa). The region spanning 400 to 475 is the B5 domain; it reads PEAKQVGLRL…RVYGYENIPD (76 aa). Mg(2+) is bound by residues D453, D459, E462, and E463. The 93-residue stretch at 694–786 folds into the FDX-ACB domain; that stretch reads SKFQPVRRDL…AATAAGARLR (93 aa).

Belongs to the phenylalanyl-tRNA synthetase beta subunit family. Type 1 subfamily. In terms of assembly, tetramer of two alpha and two beta subunits. Requires Mg(2+) as cofactor.

It localises to the cytoplasm. The enzyme catalyses tRNA(Phe) + L-phenylalanine + ATP = L-phenylalanyl-tRNA(Phe) + AMP + diphosphate + H(+). The protein is Phenylalanine--tRNA ligase beta subunit (pheT) of Neisseria meningitidis serogroup B (strain ATCC BAA-335 / MC58).